Here is a 156-residue protein sequence, read N- to C-terminus: Small ribosomal subunit protein uS7 (156 aa).

The protein belongs to the universal ribosomal protein uS7 family. As to quaternary structure, part of the 30S ribosomal subunit. Contacts proteins S9 and S11.

Functionally, one of the primary rRNA binding proteins, it binds directly to 16S rRNA where it nucleates assembly of the head domain of the 30S subunit. Is located at the subunit interface close to the decoding center, probably blocks exit of the E-site tRNA. The polypeptide is Small ribosomal subunit protein uS7 (Citrifermentans bemidjiense (strain ATCC BAA-1014 / DSM 16622 / JCM 12645 / Bem) (Geobacter bemidjiensis)).